We begin with the raw amino-acid sequence, 78 residues long: Small ribosomal subunit protein bS18 (78 aa).

The protein belongs to the bacterial ribosomal protein bS18 family. As to quaternary structure, part of the 30S ribosomal subunit. Forms a tight heterodimer with protein bS6.

Its function is as follows. Binds as a heterodimer with protein bS6 to the central domain of the 16S rRNA, where it helps stabilize the platform of the 30S subunit. The protein is Small ribosomal subunit protein bS18 of Clostridium novyi (strain NT).